The chain runs to 312 residues: Olfactory receptor 6C76 (312 aa).

The Extracellular portion of the chain corresponds to 1 to 23 (MKNRTSVTDFILLGLTDNPQLQV). Asn-3 carries an N-linked (GlcNAc...) asparagine glycan. The chain crosses the membrane as a helical span at residues 24–44 (VIFSFLFLTYVLSVTGNLTII). At 45-57 (SLTLLDSHLKTPM) the chain is on the cytoplasmic side. A helical membrane pass occupies residues 58 to 80 (YFFLRNFSLEISFTSVCNPRFLI). Residues 81 to 94 (SILTGDKSISYNAC) are Extracellular-facing. Cys-94 and Cys-176 are oxidised to a cystine. A helical transmembrane segment spans residues 95–115 (AAQLFFFIFLGSTEFFLLASM). At 116–142 (SYDCYVAICKPLHYTTIMSDRICYQLI) the chain is on the cytoplasmic side. A helical transmembrane segment spans residues 143–163 (ISSWLAGFLVIFPPLAMGLQL). Residues 164 to 195 (DFCDSNVIDHFTCDSAPLLQISCTDTSTLELM) lie on the Extracellular side of the membrane. A helical transmembrane segment spans residues 196-216 (SFILALFTLISTLILVILSYT). The Cytoplasmic segment spans residues 217-238 (YIIRTILRIPSAQQRKKAFSTC). Residues 239–259 (SSHVIVVSISYGSCIFMYVKT) form a helical membrane-spanning segment. The Extracellular segment spans residues 260-267 (SAKEGVAL). The helical transmembrane segment at 268-288 (TKGVAILNTSVAPMLNPFIYT) threads the bilayer. Residues 289–312 (LRNQQVKQAFKDVLRKISHKKKKH) are Cytoplasmic-facing.

It belongs to the G-protein coupled receptor 1 family.

The protein resides in the cell membrane. Functionally, odorant receptor. In Homo sapiens (Human), this protein is Olfactory receptor 6C76 (OR6C76).